The primary structure comprises 175 residues: CDP-archaeol synthase (175 aa).

4 consecutive transmembrane segments (helical) span residues 41–61 (GFFV…QLLE), 82–102 (TILI…MSFF), 122–142 (FVLG…AEQF), and 147–167 (IAVI…VGYF).

It belongs to the CDP-archaeol synthase family. Mg(2+) is required as a cofactor.

Its subcellular location is the cell membrane. The enzyme catalyses 2,3-bis-O-(geranylgeranyl)-sn-glycerol 1-phosphate + CTP + H(+) = CDP-2,3-bis-O-(geranylgeranyl)-sn-glycerol + diphosphate. It participates in membrane lipid metabolism; glycerophospholipid metabolism. In terms of biological role, catalyzes the formation of CDP-2,3-bis-(O-geranylgeranyl)-sn-glycerol (CDP-archaeol) from 2,3-bis-(O-geranylgeranyl)-sn-glycerol 1-phosphate (DGGGP) and CTP. This reaction is the third ether-bond-formation step in the biosynthesis of archaeal membrane lipids. This Methanococcoides burtonii (strain DSM 6242 / NBRC 107633 / OCM 468 / ACE-M) protein is CDP-archaeol synthase.